Reading from the N-terminus, the 170-residue chain is Cyclic pyranopterin monophosphate synthase (170 aa).

Residues Met-75–His-77 and Met-115–Glu-116 contribute to the substrate site. Residue Asp-130 is part of the active site.

Belongs to the MoaC family. Homohexamer; trimer of dimers.

The catalysed reaction is (8S)-3',8-cyclo-7,8-dihydroguanosine 5'-triphosphate = cyclic pyranopterin phosphate + diphosphate. The protein operates within cofactor biosynthesis; molybdopterin biosynthesis. In terms of biological role, catalyzes the conversion of (8S)-3',8-cyclo-7,8-dihydroguanosine 5'-triphosphate to cyclic pyranopterin monophosphate (cPMP). This chain is Cyclic pyranopterin monophosphate synthase, found in Bacillus subtilis (strain 168).